A 69-amino-acid chain; its full sequence is UPF0346 protein llmg_2280 (69 aa).

Belongs to the UPF0346 family.

The chain is UPF0346 protein llmg_2280 from Lactococcus lactis subsp. cremoris (strain MG1363).